We begin with the raw amino-acid sequence, 536 residues long: Phosphoenolpyruvate carboxykinase (ATP) (536 aa).

Positions 61, 195, and 201 each coordinate substrate. Residues Lys201, His220, and 236-244 contribute to the ATP site; that span reads GLSGTGKTT. Positions 201 and 220 each coordinate Mn(2+). Asp257 provides a ligand contact to Mn(2+). ATP is bound by residues Glu285, Arg322, and Thr447. Residue Arg322 coordinates substrate.

Belongs to the phosphoenolpyruvate carboxykinase (ATP) family. Mn(2+) is required as a cofactor.

The protein localises to the cytoplasm. The catalysed reaction is oxaloacetate + ATP = phosphoenolpyruvate + ADP + CO2. It functions in the pathway carbohydrate biosynthesis; gluconeogenesis. Involved in the gluconeogenesis. Catalyzes the conversion of oxaloacetate (OAA) to phosphoenolpyruvate (PEP) through direct phosphoryl transfer between the nucleoside triphosphate and OAA. This is Phosphoenolpyruvate carboxykinase (ATP) from Agrobacterium fabrum (strain C58 / ATCC 33970) (Agrobacterium tumefaciens (strain C58)).